The chain runs to 306 residues: Protoheme IX farnesyltransferase (306 aa).

The next 9 membrane-spanning stretches (helical) occupy residues Leu-35–Leu-55, Leu-61–Val-81, Leu-106–Val-126, Leu-129–Leu-149, Ile-157–Gly-177, Ala-183–Leu-203, Glu-224–Pro-244, Phe-245–Phe-265, and Arg-286–Ile-306.

It belongs to the UbiA prenyltransferase family. Protoheme IX farnesyltransferase subfamily.

The protein resides in the cell inner membrane. It catalyses the reaction heme b + (2E,6E)-farnesyl diphosphate + H2O = Fe(II)-heme o + diphosphate. Its pathway is porphyrin-containing compound metabolism; heme O biosynthesis; heme O from protoheme: step 1/1. Converts heme B (protoheme IX) to heme O by substitution of the vinyl group on carbon 2 of heme B porphyrin ring with a hydroxyethyl farnesyl side group. The protein is Protoheme IX farnesyltransferase of Polaromonas naphthalenivorans (strain CJ2).